The primary structure comprises 598 residues: MRIDQSVIDEIKNKTDILDLVSEYVKLEKRGRNYIGLCPFHDEKTPSFTVSEDKQICHCFGCKKGGNVFQFTQEIKDVSFVEAVKDLGERVNIQVDIGQNQTNSSTKIASDELKMIEMHELIKDYYHYALMKTVEGEEALNYLHERGFTDDLIKEREIGYAPDNSHFCHDFLEKKGYDIELAFEAGLLSRNEENFTYFDRFRNRIMFPLKNGQGRIVGYSGRTYTDQEPKYLNSPETPIFQKRRILYNLNKARKFIRKQDEIILLEGFMDVIKSDYAGLKQVVASMGTQLSQEHITFLQKLTQNVTLMFDGDYAGKEATLKTGQALLNQGLNVYVVQLPSGMDPDDYIRKYDNEQFLKFVQQDKQSFVLFKVKMYQNEINHNDLAYEKHFKETVRDLSLVNSGIIRNKLIQNIADIFKVNPETIQYELDATYQHQMSSNTYPTFQDEPSKQQLILGRLTKNEKAERALIKHLTKDKDTFLNYYQKIVPEDFTNSYLKRIFSYLYDYYSKNDYYTISDMMQYIESNELREVLIELDQYHLNDEPYENEIEDYIQIIKNNNNEDSLESLNYKLREASRIGDSELQKYYLQLIVNKNKNRM.

The CHC2-type zinc finger occupies 38-62 (CPFHDEKTPSFTVSEDKQICHCFGC). Residues 260 to 341 (DEIILLEGFM…NVYVVQLPSG (82 aa)) enclose the Toprim domain. Positions 266, 310, and 312 each coordinate Mg(2+).

It belongs to the DnaG primase family. As to quaternary structure, monomer. Interacts with DnaB. It depends on Zn(2+) as a cofactor. Mg(2+) is required as a cofactor.

It carries out the reaction ssDNA + n NTP = ssDNA/pppN(pN)n-1 hybrid + (n-1) diphosphate.. Its function is as follows. RNA polymerase that catalyzes the synthesis of short RNA molecules used as primers for DNA polymerase during DNA replication. The chain is DNA primase from Staphylococcus epidermidis (strain ATCC 12228 / FDA PCI 1200).